A 217-amino-acid polypeptide reads, in one-letter code: Urease accessory protein UreG (217 aa).

13–20 (GPVGSGKT) is a GTP binding site.

This sequence belongs to the SIMIBI class G3E GTPase family. UreG subfamily. As to quaternary structure, homodimer. UreD, UreF and UreG form a complex that acts as a GTP-hydrolysis-dependent molecular chaperone, activating the urease apoprotein by helping to assemble the nickel containing metallocenter of UreC. The UreE protein probably delivers the nickel.

It is found in the cytoplasm. Its function is as follows. Facilitates the functional incorporation of the urease nickel metallocenter. This process requires GTP hydrolysis, probably effectuated by UreG. This chain is Urease accessory protein UreG, found in Frankia alni (strain DSM 45986 / CECT 9034 / ACN14a).